The following is a 201-amino-acid chain: Holliday junction branch migration complex subunit RuvA (201 aa).

The segment at 1-63 (MYDYIKGTVT…EDNISLFGFQ (63 aa)) is domain I. The segment at 64 to 142 (TTEERYLFKK…DVVASEIVYV (79 aa)) is domain II. Residues 143-153 (APENDMVAGLS) are flexible linker. The segment at 153–201 (SPQLEEAVLALEALGYSTRELKKVIPKLAKEADLTSDAYIKLALQLMTK) is domain III.

This sequence belongs to the RuvA family. As to quaternary structure, homotetramer. Forms an RuvA(8)-RuvB(12)-Holliday junction (HJ) complex. HJ DNA is sandwiched between 2 RuvA tetramers; dsDNA enters through RuvA and exits via RuvB. An RuvB hexamer assembles on each DNA strand where it exits the tetramer. Each RuvB hexamer is contacted by two RuvA subunits (via domain III) on 2 adjacent RuvB subunits; this complex drives branch migration. In the full resolvosome a probable DNA-RuvA(4)-RuvB(12)-RuvC(2) complex forms which resolves the HJ.

It is found in the cytoplasm. Its function is as follows. The RuvA-RuvB-RuvC complex processes Holliday junction (HJ) DNA during genetic recombination and DNA repair, while the RuvA-RuvB complex plays an important role in the rescue of blocked DNA replication forks via replication fork reversal (RFR). RuvA specifically binds to HJ cruciform DNA, conferring on it an open structure. The RuvB hexamer acts as an ATP-dependent pump, pulling dsDNA into and through the RuvAB complex. HJ branch migration allows RuvC to scan DNA until it finds its consensus sequence, where it cleaves and resolves the cruciform DNA. This Listeria monocytogenes serovar 1/2a (strain ATCC BAA-679 / EGD-e) protein is Holliday junction branch migration complex subunit RuvA.